Here is a 416-residue protein sequence, read N- to C-terminus: Elongation factor 1-gamma 3 (416 aa).

The GST N-terminal domain maps to 1 to 82 (MALVLHCGSG…YVARLKDNSS (82 aa)). A GST C-terminal domain is found at 87-215 (SLIDYSHIEQ…FKQAESVPPV (129 aa)). The segment at 213-263 (PPVQKKAAPPKESKAKEAKKEAPKEAPKPKVEASEEEEAPKPKPKNPLDLL) is disordered. Basic and acidic residues predominate over residues 221–245 (PPKESKAKEAKKEAPKEAPKPKVEA). Residues 256 to 416 (PKNPLDLLPP…EDLLDAKCFK (161 aa)) enclose the EF-1-gamma C-terminal domain.

In terms of assembly, EF-1 is composed of four subunits: alpha, beta, delta, and gamma.

In terms of biological role, probably plays a role in anchoring the complex to other cellular components. The polypeptide is Elongation factor 1-gamma 3 (Oryza sativa subsp. japonica (Rice)).